Here is a 369-residue protein sequence, read N- to C-terminus: Phenylalanine--tRNA ligase alpha subunit (369 aa).

Glu-272 contributes to the Mg(2+) binding site.

This sequence belongs to the class-II aminoacyl-tRNA synthetase family. Phe-tRNA synthetase alpha subunit type 1 subfamily. As to quaternary structure, tetramer of two alpha and two beta subunits. Mg(2+) is required as a cofactor.

Its subcellular location is the cytoplasm. It carries out the reaction tRNA(Phe) + L-phenylalanine + ATP = L-phenylalanyl-tRNA(Phe) + AMP + diphosphate + H(+). The polypeptide is Phenylalanine--tRNA ligase alpha subunit (Cutibacterium acnes (strain DSM 16379 / KPA171202) (Propionibacterium acnes)).